The sequence spans 544 residues: Chaperonin GroEL 1 (544 aa).

Residues 29 to 32 (TLGP), 86 to 90 (DGTTT), G413, 479 to 481 (NAA), and D495 each bind ATP.

The protein belongs to the chaperonin (HSP60) family. Forms a cylinder of 14 subunits composed of two heptameric rings stacked back-to-back. Interacts with the co-chaperonin GroES.

Its subcellular location is the cytoplasm. It carries out the reaction ATP + H2O + a folded polypeptide = ADP + phosphate + an unfolded polypeptide.. In terms of biological role, together with its co-chaperonin GroES, plays an essential role in assisting protein folding. The GroEL-GroES system forms a nano-cage that allows encapsulation of the non-native substrate proteins and provides a physical environment optimized to promote and accelerate protein folding. This is Chaperonin GroEL 1 from Trichormus variabilis (strain ATCC 29413 / PCC 7937) (Anabaena variabilis).